The primary structure comprises 122 residues: Large ribosomal subunit protein uL14 (122 aa).

It belongs to the universal ribosomal protein uL14 family. Part of the 50S ribosomal subunit. Forms a cluster with proteins L3 and L19. In the 70S ribosome, L14 and L19 interact and together make contacts with the 16S rRNA in bridges B5 and B8.

Binds to 23S rRNA. Forms part of two intersubunit bridges in the 70S ribosome. The polypeptide is Large ribosomal subunit protein uL14 (Chlamydia muridarum (strain MoPn / Nigg)).